We begin with the raw amino-acid sequence, 229 residues long: 2-phytyl-1,4-naphtoquinone methyltransferase (229 aa).

This sequence belongs to the class I-like SAM-binding methyltransferase superfamily. MenG/UbiE family.

The catalysed reaction is demethylphylloquinol + S-adenosyl-L-methionine = phylloquinol + S-adenosyl-L-homocysteine + H(+). Its pathway is cofactor biosynthesis; phylloquinone biosynthesis. Methyltransferase required for the conversion of 2-phytyl-1,4-beta-naphthoquinol to phylloquinol. This chain is 2-phytyl-1,4-naphtoquinone methyltransferase, found in Nostoc sp. (strain PCC 7120 / SAG 25.82 / UTEX 2576).